Reading from the N-terminus, the 495-residue chain is Leucine aminopeptidase 2 (495 aa).

An N-terminal signal peptide occupies residues 1-21 (MKSQLLSLAVAVSTISQGVVG). The PA domain maps to 124–218 (PPANKIMAEL…EDGKNLASLV (95 aa)). 2 N-linked (GlcNAc...) asparagine glycosylation sites follow: Asn-142 and Asn-235. Zn(2+)-binding residues include His-259 and Asp-271. N-linked (GlcNAc...) asparagine glycosylation occurs at Asn-272. The active-site Proton acceptor is Glu-303. The Zn(2+) site is built by Glu-304 and Asp-332. A glycan (N-linked (GlcNAc...) asparagine) is linked at Asn-352. His-430 is a binding site for Zn(2+).

Belongs to the peptidase M28 family. M28A subfamily. In terms of assembly, monomer. Zn(2+) is required as a cofactor.

The protein resides in the secreted. In terms of biological role, extracellular aminopeptidase that releases a wide variety of amino acids from natural peptides and contributes to pathogenicity. In Trichophyton equinum (Horse ringworm fungus), this protein is Leucine aminopeptidase 2 (LAP2).